The chain runs to 95 residues: Small integral membrane protein 26 (95 aa).

Residues 13–35 (MSVVYGIGTWSVLGSLLYYSRTM) form a helical membrane-spanning segment.

Belongs to the SMIM26 family. Interacts with AGK and SLC25A11. As to expression, detected in kidney (at protein level).

The protein localises to the mitochondrion outer membrane. In terms of biological role, may play a role in cell viability. The protein is Small integral membrane protein 26 of Homo sapiens (Human).